We begin with the raw amino-acid sequence, 246 residues long: Acetoacetate decarboxylase (246 aa).

K116 acts as the Schiff-base intermediate with acetoacetate in catalysis.

It belongs to the ADC family.

The catalysed reaction is acetoacetate + H(+) = acetone + CO2. Its function is as follows. Catalyzes the conversion of acetoacetate to acetone and carbon dioxide. The sequence is that of Acetoacetate decarboxylase from Burkholderia lata (strain ATCC 17760 / DSM 23089 / LMG 22485 / NCIMB 9086 / R18194 / 383).